Here is a 460-residue protein sequence, read N- to C-terminus: Cysteine--tRNA ligase (460 aa).

Cysteine 29 provides a ligand contact to Zn(2+). Residues 31-41 (MTIYDLCHIGH) carry the 'HIGH' region motif. Positions 213, 238, and 242 each coordinate Zn(2+). A 'KMSKS' region motif is present at residues 270–274 (KMSKS). Lysine 273 lines the ATP pocket.

Belongs to the class-I aminoacyl-tRNA synthetase family. As to quaternary structure, monomer. It depends on Zn(2+) as a cofactor.

It localises to the cytoplasm. It catalyses the reaction tRNA(Cys) + L-cysteine + ATP = L-cysteinyl-tRNA(Cys) + AMP + diphosphate. The sequence is that of Cysteine--tRNA ligase from Verminephrobacter eiseniae (strain EF01-2).